We begin with the raw amino-acid sequence, 187 residues long: Cerebral dopamine neurotrophic factor (187 aa).

Residues 1–24 (MRCISPTALVTFCAGFCISNPVLA) form the signal peptide. Cystine bridges form between Cys37–Cys124, Cys40–Cys113, and Cys71–Cys82.

Belongs to the ARMET family. In terms of tissue distribution, expressed at high levels in the heart, skeletal muscle, testis and brain (at protein level). In the brain, detected in the cerebral cortex neurons through layers II to VI. In the hippocampus, detected in the CA1 to CA3 pyramidal regions and in the granule and polymorph layers of dentate gyrus. Weak expression in the striatum. In substantia nigra, detected in solitary cells that did not express tyrosine hydroxylase, a marker for dopaminergic neurons. Relatively high expression in the Purkinje cells of the cerebellum and in regions of the brain stem, including the locus coeruleus.

The protein localises to the secreted. Trophic factor for dopamine neurons. Prevents the 6-hydroxydopamine (6-OHDA)-induced degeneration of dopaminergic neurons. When administered after 6-OHDA-lesioning, restores the dopaminergic function and prevents the degeneration of dopaminergic neurons in substantia nigra. This chain is Cerebral dopamine neurotrophic factor (Cdnf), found in Mus musculus (Mouse).